The sequence spans 2211 residues: Norsolorinic acid synthase stcA (2211 aa).

The starter unit:ACP transacylase (SAT) domain stretch occupies residues 11–251; it reads FLFGDQTYDF…REIPIYVPAH (241 aa). Residues 358 to 378 are disordered; that stretch reads PAEPPTSINKTPERYSHRPGS. Residues 368–378 are compositionally biased toward basic and acidic residues; it reads TPERYSHRPGS. A Ketosynthase family 3 (KS3) domain is found at 380-812; it reads RGKLAIVSMS…GGNTAVLVED (433 aa). Catalysis depends on for beta-ketoacyl synthase activity residues Cys-552, His-687, and His-730. A malonyl-CoA:ACP transacylase (MAT) domain region spans residues 912–1201; it reads IACSGQGSQY…MAGMIKTTLD (290 aa). Catalysis depends on Ser-1004, which acts as the For acyl/malonyl transferase activity. The tract at residues 1289–1316 is disordered; it reads TATSDYQLPSDEQVAAKRPSKQDESKEA. An N-terminal hotdog fold region spans residues 1327-1468; that stretch reads HRVVEEKTEP…CTVRFTSEAQ (142 aa). The PKS/mFAS DH domain maps to 1327–1643; the sequence is HRVVEEKTEP…LRRVPRRGLR (317 aa). A product template (PT) domain region spans residues 1340-1643; it reads TLVVETDISR…LRRVPRRGLR (304 aa). The active-site Proton acceptor; for dehydratase activity is His-1359. Residues 1495 to 1643 are C-terminal hotdog fold; that stretch reads FIRYTTKSGY…LRRVPRRGLR (149 aa). Asp-1555 functions as the Proton donor; for dehydratase activity in the catalytic mechanism. The disordered stretch occupies residues 1655–1706; sequence RLHGNQQAVKTQAPQRAALKQKPQSSPTQPHASKVAYSRSATSPTAGKPVVA. 2 stretches are compositionally biased toward polar residues: residues 1658 to 1668 and 1676 to 1685; these read GNQQAVKTQAP and KPQSSPTQPH. Carrier domains follow at residues 1712-1791 and 1839-1915; these read REGD…SGSA and DELF…GTTS. O-(pantetheine 4'-phosphoryl)serine occurs at positions 1749 and 1873. The span at 1912 to 1926 shows a compositional bias: low complexity; it reads GTTSGSTTGSSGSGS. The segment at 1912-1947 is disordered; sequence GTTSGSTTGSSGSGSSEDETDSIPSTPEEYTTADTR. The span at 1934-1945 shows a compositional bias: polar residues; the sequence is IPSTPEEYTTAD. The segment at 1969–2205 is thioesterase/Claisen cyclase (TE/CLC) domain; sequence ILFMLPDGGG…KEHVYLVREL (237 aa). The active-site For thioesterase activity is the Ser-2039.

The cofactor is pantetheine 4'-phosphate.

The enzyme catalyses hexanoyl-[ACP] + 7 malonyl-CoA + 6 H(+) = noranthrone + holo-[ACP] + 7 CO2 + 7 CoA + 2 H2O. It participates in mycotoxin biosynthesis; sterigmatocystin biosynthesis. Functionally, non-reducing polyketide synthase; part of the gene cluster that mediates the biosynthesis of sterigmatocystin (ST), a polyketide-derived furanocoumarin which is part of the most toxic and carcinogenic compounds among the known mycotoxins. The first step in the biosynthesis of sterigmatocystin is the production of hexanoate by the fatty acid synthase (FAS) units stcJ and stcK. The polyketide backbone is assembled by the non-reducing polyketide synthase stcA by condensation of the starter hexanoyl-CoA and 7 malonyl-CoA extender units followed by cyclization and release of norsolorinic acid. Norsolorinic acid is the first stable intermediate in the biosynthesis of sterigmatocystin and is converted into averantin (AVN) by the ketoreductase stcE which reduces the hexanoate ketone to an alcohol. Averantin is then oxidized into 5'-hydroxyaverantin (HAVN) by the cytochrome P450 monooxygenase stcF. 5'-hydroxyaverantin is further converted to 5'-oxyaverantin (OAVN) by the 5'-hydroxyaverantin dehydrogenase stcG. The next step is the conversion of OAVN into averufin (AVF) which is catalyzed by a yet to be identified enzyme. The cytochrome P450 monooxygenase stcB and the flavin-binding monooxygenase stcW are both required for the conversion of averufin to 1-hydroxyversicolorone. The esterase stcI probably catalyzes the formation of versiconal hemiacetal acetate from 1-hydroxyversicolorone. The oxydoreductase stcN then probably catalyzes the biosynthetic step from versiconal to versicolorin B (VERB). The next step is performed by the versicolorin B desaturase stcL to produce versicolorin A (VERA). The ketoreductase stcU and the cytochrome P450 monooxygenase stcS are involved in the conversion of versicolorin A to demethylsterigmatocystin. The Baeyer-Villiger oxidas stcQ and the reductase stcR might be involved in the biosynthetic step from versicolorin A to demethylsterigmatocystin. The final step in the biosynthesis of sterigmatocystin is the methylation of demethylsterigmatocystin catalyzed by the methyltransferase stcP. The protein is Norsolorinic acid synthase stcA of Emericella nidulans (strain FGSC A4 / ATCC 38163 / CBS 112.46 / NRRL 194 / M139) (Aspergillus nidulans).